Reading from the N-terminus, the 521-residue chain is Organic cation/carnitine transporter 6 (521 aa).

The Cytoplasmic portion of the chain corresponds to 1–37; sequence MADPISEPLLSHLTDDSGVNEKTRLEALTFDKIVEQS. The helical transmembrane segment at 38-58 threads the bilayer; sequence LSDFGFWQFFQISLVGLALLF. At 59–123 the chain is on the extracellular side; sequence DAQQIFITVY…GLECSSSLLR (65 aa). An N-linked (GlcNAc...) asparagine glycan is attached at N79. Residues 124–144 traverse the membrane as a helical segment; that stretch reads GMPSSAFYIGAIVGGFFLALI. Over 145 to 154 the chain is Cytoplasmic; that stretch reads PDDSLGRKKL. The helical transmembrane segment at 155-177 threads the bilayer; sequence VLFSTFAMSITSISVIFSTNVWI. At 178–182 the chain is on the extracellular side; that stretch reads YTFLK. A helical transmembrane segment spans residues 183-200; it reads FIIGFSRSQTWSYALVLI. 200–207 serves as a coordination point for ATP; the sequence is ISERVSTR. Residues 201–213 lie on the Cytoplasmic side of the membrane; sequence SERVSTRWRPRAT. The helical transmembrane segment at 214 to 234 threads the bilayer; it reads MIPFTLFVLGFMSLSGIAFLA. Topologically, residues 235–241 are extracellular; that stretch reads QDSSWRY. Residues 242–262 traverse the membrane as a helical segment; that stretch reads LYLYTSVPAVFYCIFLYLFAL. The Cytoplasmic portion of the chain corresponds to 263–326; the sequence is ESPRWLHMQG…FFFRKWAFRR (64 aa). A helical transmembrane segment spans residues 327–347; it reads ILVVMIIMFGLGISYYGVPLA. Residues 348–356 lie on the Extracellular side of the membrane; that stretch reads ARDIDVNIY. A helical membrane pass occupies residues 357-377; that stretch reads LSETLNALVELPTFVITPILL. Over 378–385 the chain is Cytoplasmic; that stretch reads ERFNRRSS. A helical transmembrane segment spans residues 386–406; that stretch reads VLVNTLLGGASGVLCFVLSIL. Over 407 to 412 the chain is Extracellular; the sequence is GKTEIA. Residues 413 to 433 form a helical membrane-spanning segment; the sequence is FAFELGTFFCARIGFNLMAVF. The Cytoplasmic segment spans residues 434–447; sequence MVEMFPTCVRSSAT. A helical membrane pass occupies residues 448–468; sequence MMFRQALVVGGACCPLIASIG. The Extracellular portion of the chain corresponds to 469-473; the sequence is RYIPS. A helical transmembrane segment spans residues 474–494; it reads VSFAIFGIAMSGLGMFVLILP. Residues 495–521 are Cytoplasmic-facing; it reads ETKGLSLCDSMEEQEKRDQAVNTSHVC.

This sequence belongs to the major facilitator (TC 2.A.1) superfamily. Organic cation transporter (TC 2.A.1.19) family. Expressed in roots and stems. In the stem of secondary inflorescences, localized to the phloem. Also present in flowers, specifically in the stamen, in the filaments and the connective, and restricted to major veins in leaves.

It localises to the vacuole membrane. Its function is as follows. High affinity carnitine transporter involved in the active cellular uptake of carnitine. Also transports organic cations. This Arabidopsis thaliana (Mouse-ear cress) protein is Organic cation/carnitine transporter 6 (OCT6).